A 151-amino-acid chain; its full sequence is MFRGANAISLDAKGRLAMPSRYRDELDSRSSGQLIVTIDAVDPCLCVYPLDEWEIIETKLRALPSLREENRRLQRLLIGNAVDLELDGSGRFLVPPRLREYAKLDKRAMLVGQLNKFQLWDEDAWNAVSAADLAAIQQPGAMPDELRDLIL.

2 consecutive SpoVT-AbrB domains span residues 5-52 (ANAI…PLDE) and 81-124 (AVDL…DEDA).

This sequence belongs to the MraZ family. Forms oligomers.

The protein resides in the cytoplasm. It is found in the nucleoid. The chain is Transcriptional regulator MraZ from Pseudomonas fluorescens (strain Pf0-1).